The primary structure comprises 341 residues: MIIDDVIIGKGIGDIEFSRENTIFVLIAGTTEVSLRSGITAAGASPEFTRITPTVDAEIIGEGKCLSTADPPMTPEGIPTPAIVSRAILDLTGLRSLIVNGGFSVRPKTAFFETYIEPSRDPGLDRAVMEAERVMEAGRRLGKILDGNFKNIILGESFPGGTTTAYVVLRSLGIDSGTSSSMPVDPDNLKKKVAEESFRRRNVRSPLEAATEYGDNLMIFMIGLAESIRSSKMILGGGTQMANAANLIAKVNGRTDQVVATTQWVFSHRSDLFRILGLEDRSIISVMDFGRMRNNGLRLYNQGHVREGVGMGALYSYARIAGFSREEIESAIDDFYTTFLR.

It belongs to the UPF0284 family.

This chain is UPF0284 protein Ta0078, found in Thermoplasma acidophilum (strain ATCC 25905 / DSM 1728 / JCM 9062 / NBRC 15155 / AMRC-C165).